The primary structure comprises 776 residues: MAALIYRQLLTNSYTVELSDEIQEIGSTKTQNVTVNPGPFAQTNYAPVNWGPGETNDSTTVEPVLDGPYQPTTFNPPVSYWMLLAPTNAGVVVEGTNNTNRWLATILIEPNVQQVERTYTLFGQQVQVTVSNDSQTKWKFVDLSKQTQDGNYSQHGSLLSTPKLYGVMKHGGKIYTYNGETPNANTGYYSTTNFDTVNMTAYCDFYIIPLAQEAKCTEYINNGLPPIQNTRNIVPVSIVSRNIVYTRAQPNQDIVVSKTSLWKEMQYNRDIVIRFKFANSIIKSGGLGYKWSEVSFKPANYQYTYTRDGEEVTAHTTCSVNGVNDFNYNGGSLPTDFVISKYEVIKENSFVYIDYWDDSQAFRNMVYVRSLAADLNSVMCTGGDYSFALPVGNYPVMTGGAVSLHSAGVTLSTQFTDFVSLNSLRFRFRLSVEEPPFSILRTRVSGLYGLPAAKPNNSQEYYEIAGRFSLISLVPLNDDYQTPIMNSVTVRQDLERQLGELRDEFNNLSQQIAMSQLIDLALLPLDMFSMFSGIKSTIDAAKSMATNVMKRFKKSSLANSVSTLTDSLSDAASSISRSASVRSVSSTASAWTEVSNIASDINVTTSSISTQTSTISRRLRLKEMATQTDGMNFDDISAAVLKTKIDKSTQLNTNTLPEIVTEASEKFIPNRAYRVIKDDEVLEASIDGKYFAYKVETFEEIPFDVQKFADLVTDSPVISAIIDFKTLKNLNDNYGISRQQALNLLRSDPRVLREFINQDNPIIRNRIESLIMQCRL.

Residues 65–224 (LDGPYQPTTF…KCTEYINNGL (160 aa)) are spike head. A disulfide bridge connects residues Cys203 and Cys216. Residues 248 to 479 (AQPNQDIVVS…LISLVPLNDD (232 aa)) form a spike body and stalk (antigen domain) region. Residues 308–310 (DGE) carry the DGE motif; interaction with ITGA2/ITGB1 heterodimer motif. Cys318 and Cys380 are disulfide-bonded. A hydrophobic; possible role in virus entry into host cell region spans residues 389–409 (LPVGNYPVMTGGAVSLHSAGV). The YGL motif; interaction with ITGA4 signature appears at 448 to 450 (YGL). The stretch at 484–518 (IMNSVTVRQDLERQLGELRDEFNNLSQQIAMSQLI) forms a coiled coil. Residues 510-776 (QQIAMSQLID…IESLIMQCRL (267 aa)) are spike foot. Positions 644–646 (KID) match the KID motif; interaction with HSPA8 motif.

This sequence belongs to the rotavirus VP4 family. In terms of assembly, homotrimer. VP4 adopts a dimeric appearance above the capsid surface, while forming a trimeric base anchored inside the capsid layer. Only hints of the third molecule are observed above the capsid surface. It probably performs a series of molecular rearrangements during viral entry. Prior to trypsin cleavage, it is flexible. The priming trypsin cleavage triggers its rearrangement into rigid spikes with approximate two-fold symmetry of their protruding parts. After an unknown second triggering event, cleaved VP4 may undergo another rearrangement, in which two VP5* subunits fold back on themselves and join a third subunit to form a tightly associated trimer, shaped like a folded umbrella. Interacts with VP6. Interacts with VP7. Homotrimer. The trimer is coiled-coil stabilized by its C-terminus, however, its N-terminus, known as antigen domain or 'body', seems to be flexible allowing it to self-associate either as a dimer or a trimer. Post-translationally, proteolytic cleavage by trypsin results in activation of VP4 functions and greatly increases infectivity. The penetration into the host cell is dependent on trypsin treatment of VP4. It produces two peptides, VP5* and VP8* that remain associated with the virion. Cleavage of VP4 by trypsin probably occurs in vivo in the lumen of the intestine prior to infection of enterocytes. Trypsin seems to be incorporated into the three-layered viral particles but remains inactive as long as the viral outer capsid is intact and would only be activated upon the solubilization of the latter.

The protein resides in the virion. Its subcellular location is the host rough endoplasmic reticulum. The protein localises to the host cell membrane. It localises to the host cytoplasm. It is found in the host cytoskeleton. The protein resides in the host endoplasmic reticulum-Golgi intermediate compartment. In terms of biological role, spike-forming protein that mediates virion attachment to the host epithelial cell receptors and plays a major role in cell penetration, determination of host range restriction and virulence. Rotavirus attachment and entry into the host cell probably involves multiple sequential contacts between the outer capsid proteins VP4 and VP7, and the cell receptors. It is subsequently lost, together with VP7, following virus entry into the host cell. Following entry into the host cell, low intracellular or intravesicular Ca(2+) concentration probably causes the calcium-stabilized VP7 trimers to dissociate from the virion. This step is probably necessary for the membrane-disrupting entry step and the release of VP4, which is locked onto the virion by VP7. During the virus exit from the host cell, VP4 seems to be required to target the newly formed virions to the host cell lipid rafts. Forms the spike 'foot' and 'body' and acts as a membrane permeabilization protein that mediates release of viral particles from endosomal compartments into the cytoplasm. During entry, the part of VP5* that protrudes from the virus folds back on itself and reorganizes from a local dimer to a trimer. This reorganization may be linked to membrane penetration by exposing VP5* hydrophobic region. In integrin-dependent strains, VP5* targets the integrin heterodimer ITGA2/ITGB1 for cell attachment. Its function is as follows. Forms the head of the spikes and mediates the recognition of specific host cell surface glycans. It is the viral hemagglutinin and an important target of neutralizing antibodies. In sialic acid-dependent strains, VP8* binds to host cell sialic acid, most probably a ganglioside, providing the initial contact. In some other strains, VP8* mediates the attachment to histo-blood group antigens (HBGAs) for viral entry. This chain is Outer capsid protein VP4, found in Rotavirus A (strain RVA/SA11-FEM/G3P6[1]) (RV-A).